We begin with the raw amino-acid sequence, 252 residues long: 3-deoxy-manno-octulosonate cytidylyltransferase (252 aa).

Belongs to the KdsB family.

It localises to the cytoplasm. It catalyses the reaction 3-deoxy-alpha-D-manno-oct-2-ulosonate + CTP = CMP-3-deoxy-beta-D-manno-octulosonate + diphosphate. The protein operates within nucleotide-sugar biosynthesis; CMP-3-deoxy-D-manno-octulosonate biosynthesis; CMP-3-deoxy-D-manno-octulosonate from 3-deoxy-D-manno-octulosonate and CTP: step 1/1. It participates in bacterial outer membrane biogenesis; lipopolysaccharide biosynthesis. Functionally, activates KDO (a required 8-carbon sugar) for incorporation into bacterial lipopolysaccharide in Gram-negative bacteria. The sequence is that of 3-deoxy-manno-octulosonate cytidylyltransferase from Thiobacillus denitrificans (strain ATCC 25259 / T1).